The primary structure comprises 420 residues: MSGEAPRVAVDPFACPMMTMQRKPEVHDAFREAGPVVEVNAPAGGPAWFITDDALSRYVLADPRLVKDPDLAPAAWRGVVDGLDIPVPELRPFTLIAVDGEAHRRLHRIHAPAFNPRRLAERTDRIAAIAGRLLTELADASGRSGEPAELIGGFAYHFPLLVICELLGVPVTVPMAREAVSVLKALASAAQSGGGDGTDPAGGVPDTSALESLLLEAVHSARRNDTPTMTRVLYEHTQAEFGSVSDNQLVYMITGIIFAGHERTGSFLGFLLAEVLAGRLAADADEDAVSRFVEEAVRYHPPVPYTLWRFAATEVTIGGVRLPPGAPVLVDIEGTNTDGRHHDAPHAFHPDRPSWRRLTFGDGPHYCIGEQLAQLESRTMIGVLRSRFPEARLAVPYDELRWCRNGAQTARLTELPVWLR.

C367 contributes to the heme binding site.

This sequence belongs to the cytochrome P450 family. As to quaternary structure, monomer. Heme is required as a cofactor.

Its subcellular location is the cytoplasm. It catalyses the reaction 13-deoxydaunorubicin + NADPH + O2 + H(+) = 13-dihydrodaunorubicin + NADP(+) + H2O. The enzyme catalyses 13-dihydrodaunorubicin + NADPH + O2 + H(+) = daunorubicin + NADP(+) + 2 H2O. It carries out the reaction 13-deoxycarminomycin + NADPH + O2 + H(+) = 13-dihydrocarminomycin + NADP(+) + H2O. The catalysed reaction is 13-dihydrocarminomycin + NADPH + O2 + H(+) = carminomycin + NADP(+) + 2 H2O. It catalyses the reaction daunorubicin + NADPH + O2 + H(+) = doxorubicin + NADP(+) + H2O. The protein operates within antibiotic biosynthesis; daunorubicin biosynthesis. It functions in the pathway antibiotic biosynthesis; carminomycin biosynthesis. It participates in antibiotic biosynthesis; doxorubicin biosynthesis. In terms of biological role, involved in the biosynthesis of the anthracyclines carminomycin, daunorubicin (daunomycin) and doxorubicin (adriamycin) which are aromatic polyketide antibiotics that exhibit high cytotoxicity and are widely applied in the chemotherapy of a variety of cancers. In vivo, DoxA catalyzes the C-13 hydroxylation of 13-deoxycarminomycin and 13-deoxydaunorubicin to yield 13-dihydrocarminomycin and 13-dihydrodaunorubicin, respectively, as well as the oxidation of these 13-dihydro-anthracyclines to their respective 13-keto forms, carminomycin and daunorubicin. In vivo, it also catalyzes the C-14 hydroxylation of daunorubicin to form doxorubicin. It can only use NADP. DoxA acts jointly with DnrV. The protein is Cytochrome P-450 monooxygenase DoxA (doxA) of Streptomyces peucetius subsp. caesius.